We begin with the raw amino-acid sequence, 196 residues long: Peptidyl-tRNA hydrolase (196 aa).

Tyrosine 18 provides a ligand contact to tRNA. Residue histidine 23 is the Proton acceptor of the active site. TRNA is bound by residues phenylalanine 69, asparagine 71, and asparagine 117.

It belongs to the PTH family. In terms of assembly, monomer.

Its subcellular location is the cytoplasm. It catalyses the reaction an N-acyl-L-alpha-aminoacyl-tRNA + H2O = an N-acyl-L-amino acid + a tRNA + H(+). Its function is as follows. Hydrolyzes ribosome-free peptidyl-tRNAs (with 1 or more amino acids incorporated), which drop off the ribosome during protein synthesis, or as a result of ribosome stalling. In terms of biological role, catalyzes the release of premature peptidyl moieties from peptidyl-tRNA molecules trapped in stalled 50S ribosomal subunits, and thus maintains levels of free tRNAs and 50S ribosomes. The polypeptide is Peptidyl-tRNA hydrolase (Vibrio vulnificus (strain CMCP6)).